A 162-amino-acid chain; its full sequence is MKIAIYPGTFDPVTNGHYDLIKRAACMFEKLVIGVAESPSKATLFSLDERVALLRETCYELPNVSVEGFSGLLVDFATEQNASILVRGLRTTMDFEYEFGLTTMYRRLKPELESLFLTPSEEFAFLSSTLVREVAIHGGEIEQFVPGCVHQAVVAKVKAFKN.

Thr9 contacts substrate. ATP is bound by residues 9–10 (TF) and His17. Substrate is bound by residues Lys41, Leu73, and Arg87. Residues 88–90 (GLR), Glu98, and 123–129 (FAFLSST) contribute to the ATP site.

Belongs to the bacterial CoaD family. Homohexamer. It depends on Mg(2+) as a cofactor.

The protein resides in the cytoplasm. The enzyme catalyses (R)-4'-phosphopantetheine + ATP + H(+) = 3'-dephospho-CoA + diphosphate. Its pathway is cofactor biosynthesis; coenzyme A biosynthesis; CoA from (R)-pantothenate: step 4/5. Its function is as follows. Reversibly transfers an adenylyl group from ATP to 4'-phosphopantetheine, yielding dephospho-CoA (dPCoA) and pyrophosphate. The chain is Phosphopantetheine adenylyltransferase from Vibrio atlanticus (strain LGP32) (Vibrio splendidus (strain Mel32)).